The sequence spans 124 residues: Small ribosomal subunit protein bS6 (124 aa).

It belongs to the bacterial ribosomal protein bS6 family.

Its function is as follows. Binds together with bS18 to 16S ribosomal RNA. The chain is Small ribosomal subunit protein bS6 from Actinobacillus pleuropneumoniae serotype 7 (strain AP76).